A 141-amino-acid chain; its full sequence is Actin-depolymerizing factor 9 (141 aa).

Serine 8 carries the phosphoserine modification. The ADF-H domain occupies 8–141; sequence SGMWMTDDCK…GFDKIQDRAK (134 aa).

This sequence belongs to the actin-binding proteins ADF family.

It localises to the cytoplasm. The protein localises to the cytoskeleton. Does not display typical F-actin depolymerizing activity. Exhibits a high ability to stabilize and cross-link actin filaments. Functions as an actin bundling protein with the highest efficiency under acidic conditions. May play a role in the modulation of levels of histone H3 lysine 4 trimethylation and H3 lysine 9 and 14 acetylation at the FLC locus. The sequence is that of Actin-depolymerizing factor 9 (ADF9) from Arabidopsis thaliana (Mouse-ear cress).